Reading from the N-terminus, the 354-residue chain is 3'-hydroxy-N-methyl-(S)-coclaurine 4'-O-methyltransferase 1 (354 aa).

Asp-223 is an S-adenosyl-L-methionine binding site. His-261 functions as the Proton acceptor in the catalytic mechanism.

The protein belongs to the class I-like SAM-binding methyltransferase superfamily. Cation-independent O-methyltransferase family. COMT subfamily. As to expression, expressed in roots, stems, leaves and flowers. Restricted to sieve elements of the phloem adjacent or proximal to laticifers.

The enzyme catalyses (S)-3'-hydroxy-N-methylcoclaurine + S-adenosyl-L-methionine = (S)-reticuline + S-adenosyl-L-homocysteine + H(+). Its pathway is alkaloid biosynthesis; (S)-reticuline biosynthesis; (S)-reticuline from (S)-norcoclaurine: step 4/4. Involved in the biosynthesis of benzylisoquinoline alkaloids. Catalyzes the transfer of the methyl group to the 4'-hydroxyl group of 3'-hydroxy-N-methylcoclaurine to form reticuline. Also involved in the papaverine biosynthesis. The polypeptide is 3'-hydroxy-N-methyl-(S)-coclaurine 4'-O-methyltransferase 1 (Papaver somniferum (Opium poppy)).